The sequence spans 250 residues: 3-deoxy-manno-octulosonate cytidylyltransferase (250 aa).

The protein belongs to the KdsB family.

The protein resides in the cytoplasm. It carries out the reaction 3-deoxy-alpha-D-manno-oct-2-ulosonate + CTP = CMP-3-deoxy-beta-D-manno-octulosonate + diphosphate. It participates in nucleotide-sugar biosynthesis; CMP-3-deoxy-D-manno-octulosonate biosynthesis; CMP-3-deoxy-D-manno-octulosonate from 3-deoxy-D-manno-octulosonate and CTP: step 1/1. The protein operates within bacterial outer membrane biogenesis; lipopolysaccharide biosynthesis. Activates KDO (a required 8-carbon sugar) for incorporation into bacterial lipopolysaccharide in Gram-negative bacteria. The sequence is that of 3-deoxy-manno-octulosonate cytidylyltransferase from Pectobacterium atrosepticum (strain SCRI 1043 / ATCC BAA-672) (Erwinia carotovora subsp. atroseptica).